A 469-amino-acid chain; its full sequence is 3-isopropylmalate dehydratase large subunit (469 aa).

Residues cysteine 349, cysteine 410, and cysteine 413 each coordinate [4Fe-4S] cluster.

It belongs to the aconitase/IPM isomerase family. LeuC type 1 subfamily. In terms of assembly, heterodimer of LeuC and LeuD. Requires [4Fe-4S] cluster as cofactor.

The catalysed reaction is (2R,3S)-3-isopropylmalate = (2S)-2-isopropylmalate. Its pathway is amino-acid biosynthesis; L-leucine biosynthesis; L-leucine from 3-methyl-2-oxobutanoate: step 2/4. Catalyzes the isomerization between 2-isopropylmalate and 3-isopropylmalate, via the formation of 2-isopropylmaleate. This chain is 3-isopropylmalate dehydratase large subunit, found in Neisseria meningitidis serogroup A / serotype 4A (strain DSM 15465 / Z2491).